Consider the following 159-residue polypeptide: Transcriptional repressor NrdR (159 aa).

A zinc finger spans residues 3-34; that stretch reads CPFCRHEDTQVVDSRVSEDGAAIRRRRRCSAC. The ATP-cone domain maps to 49–139; sequence PAVVKKDGSR…VYRRFEDVSE (91 aa).

The protein belongs to the NrdR family. Zn(2+) is required as a cofactor.

Negatively regulates transcription of bacterial ribonucleotide reductase nrd genes and operons by binding to NrdR-boxes. This chain is Transcriptional repressor NrdR, found in Burkholderia ambifaria (strain MC40-6).